The primary structure comprises 349 residues: DNA polymerase IV (349 aa).

The UmuC domain occupies 4 to 185 (IIHIDCDCFY…LPVAKLHGVG (182 aa)). Residues Asp8 and Asp103 each coordinate Mg(2+). Residue Glu104 is part of the active site.

It belongs to the DNA polymerase type-Y family. In terms of assembly, monomer. Mg(2+) serves as cofactor.

The protein localises to the cytoplasm. It carries out the reaction DNA(n) + a 2'-deoxyribonucleoside 5'-triphosphate = DNA(n+1) + diphosphate. In terms of biological role, poorly processive, error-prone DNA polymerase involved in untargeted mutagenesis. Copies undamaged DNA at stalled replication forks, which arise in vivo from mismatched or misaligned primer ends. These misaligned primers can be extended by PolIV. Exhibits no 3'-5' exonuclease (proofreading) activity. May be involved in translesional synthesis, in conjunction with the beta clamp from PolIII. This is DNA polymerase IV from Pseudomonas paraeruginosa (strain DSM 24068 / PA7) (Pseudomonas aeruginosa (strain PA7)).